Reading from the N-terminus, the 236-residue chain is Uridylate kinase (236 aa).

12 to 15 (KISG) is a binding site for ATP. The segment at 20–25 (GKKGFG) is involved in allosteric activation by GTP. Residue G54 coordinates UMP. ATP contacts are provided by G55 and R59. Residues D72 and 133–140 (TGNPYFST) each bind UMP. 2 residues coordinate ATP: Y166 and D169.

This sequence belongs to the UMP kinase family. In terms of assembly, homohexamer.

The protein localises to the cytoplasm. The enzyme catalyses UMP + ATP = UDP + ADP. The protein operates within pyrimidine metabolism; CTP biosynthesis via de novo pathway; UDP from UMP (UMPK route): step 1/1. Its activity is regulated as follows. Allosterically activated by GTP. Inhibited by UTP. Functionally, catalyzes the reversible phosphorylation of UMP to UDP. In Clostridium novyi (strain NT), this protein is Uridylate kinase.